The chain runs to 103 residues: Pyrimidine/purine nucleoside phosphorylase (103 aa).

It belongs to the nucleoside phosphorylase PpnP family.

It catalyses the reaction a purine D-ribonucleoside + phosphate = a purine nucleobase + alpha-D-ribose 1-phosphate. It carries out the reaction adenosine + phosphate = alpha-D-ribose 1-phosphate + adenine. The catalysed reaction is cytidine + phosphate = cytosine + alpha-D-ribose 1-phosphate. The enzyme catalyses guanosine + phosphate = alpha-D-ribose 1-phosphate + guanine. It catalyses the reaction inosine + phosphate = alpha-D-ribose 1-phosphate + hypoxanthine. It carries out the reaction thymidine + phosphate = 2-deoxy-alpha-D-ribose 1-phosphate + thymine. The catalysed reaction is uridine + phosphate = alpha-D-ribose 1-phosphate + uracil. The enzyme catalyses xanthosine + phosphate = alpha-D-ribose 1-phosphate + xanthine. Functionally, catalyzes the phosphorolysis of diverse nucleosides, yielding D-ribose 1-phosphate and the respective free bases. Can use uridine, adenosine, guanosine, cytidine, thymidine, inosine and xanthosine as substrates. Also catalyzes the reverse reactions. The polypeptide is Pyrimidine/purine nucleoside phosphorylase (Shewanella sp. (strain ANA-3)).